A 482-amino-acid polypeptide reads, in one-letter code: tRNA sulfurtransferase (482 aa).

The 105-residue stretch at 61–165 folds into the THUMP domain; the sequence is LAIRDALTRI…DDRLLLIKGR (105 aa). ATP-binding positions include 183-184, Lys-265, Gly-287, and Gln-296; that span reads LI. Cysteines 344 and 456 form a disulfide. The region spanning 404-482 is the Rhodanese domain; sequence FGPNDVILDI…GFNNVKVYRP (79 aa). Cys-456 (cysteine persulfide intermediate) is an active-site residue.

Belongs to the ThiI family.

Its subcellular location is the cytoplasm. The enzyme catalyses [ThiI sulfur-carrier protein]-S-sulfanyl-L-cysteine + a uridine in tRNA + 2 reduced [2Fe-2S]-[ferredoxin] + ATP + H(+) = [ThiI sulfur-carrier protein]-L-cysteine + a 4-thiouridine in tRNA + 2 oxidized [2Fe-2S]-[ferredoxin] + AMP + diphosphate. The catalysed reaction is [ThiS sulfur-carrier protein]-C-terminal Gly-Gly-AMP + S-sulfanyl-L-cysteinyl-[cysteine desulfurase] + AH2 = [ThiS sulfur-carrier protein]-C-terminal-Gly-aminoethanethioate + L-cysteinyl-[cysteine desulfurase] + A + AMP + 2 H(+). Its pathway is cofactor biosynthesis; thiamine diphosphate biosynthesis. Catalyzes the ATP-dependent transfer of a sulfur to tRNA to produce 4-thiouridine in position 8 of tRNAs, which functions as a near-UV photosensor. Also catalyzes the transfer of sulfur to the sulfur carrier protein ThiS, forming ThiS-thiocarboxylate. This is a step in the synthesis of thiazole, in the thiamine biosynthesis pathway. The sulfur is donated as persulfide by IscS. The polypeptide is tRNA sulfurtransferase (Escherichia coli (strain ATCC 8739 / DSM 1576 / NBRC 3972 / NCIMB 8545 / WDCM 00012 / Crooks)).